The chain runs to 460 residues: Homocitrate synthase (460 aa).

One can recognise a Pyruvate carboxyltransferase domain in the interval 3 to 258 (VGILDSTLRE…IEVVKLNKLQ (256 aa)). A 2-oxoglutarate-binding site is contributed by arginine 11. Residue glutamate 12 participates in Mg(2+) binding. 2-oxoglutarate-binding residues include histidine 75, arginine 135, and threonine 169. Residues histidine 197 and histidine 199 each contribute to the Mg(2+) site. Histidine 291 (proton acceptor) is an active-site residue.

It belongs to the alpha-IPM synthase/homocitrate synthase family. Homocitrate synthase LYS20/LYS21 subfamily. Forms a homotetramer in the absence of lysine, and is in hexadecamer-octamer equilibrium in the presence of lysine. The cofactor is Mg(2+). Mn(2+) is required as a cofactor.

It carries out the reaction acetyl-CoA + 2-oxoglutarate + H2O = (2R)-homocitrate + CoA + H(+). It functions in the pathway amino-acid biosynthesis; L-lysine biosynthesis via AAA pathway; L-alpha-aminoadipate from 2-oxoglutarate: step 1/5. Inhibited by lysine. Catalyzes the aldol-type condensation of 2-oxoglutarate with acetyl-CoA to yield homocitrate. Carries out the first step of the alpha-aminoadipate (AAA) lysine biosynthesis pathway. This chain is Homocitrate synthase, found in Sulfurisphaera tokodaii (strain DSM 16993 / JCM 10545 / NBRC 100140 / 7) (Sulfolobus tokodaii).